A 365-amino-acid polypeptide reads, in one-letter code: Carboxynorspermidine/carboxyspermidine decarboxylase (365 aa).

Lys-37 carries the post-translational modification N6-(pyridoxal phosphate)lysine. Residues Glu-233 and Asp-269 each coordinate substrate.

Belongs to the Orn/Lys/Arg decarboxylase class-II family. NspC subfamily. In terms of assembly, homodimer. Requires pyridoxal 5'-phosphate as cofactor.

It is found in the cytoplasm. The enzyme catalyses carboxynorspermidine + H(+) = norspermidine + CO2. It carries out the reaction carboxyspermidine + H(+) = spermidine + CO2. Its function is as follows. Catalyzes the decarboxylation of carboxynorspermidine and carboxyspermidine. The polypeptide is Carboxynorspermidine/carboxyspermidine decarboxylase (Herminiimonas arsenicoxydans).